Consider the following 471-residue polypeptide: Glutamate--tRNA ligase (471 aa).

The short motif at 9–19 (PSPTGYLHVGG) is the 'HIGH' region element. Positions 98, 100, 125, and 127 each coordinate Zn(2+). The 'KMSKS' region signature appears at 237–241 (KLSKR). Residue Lys-240 coordinates ATP.

Belongs to the class-I aminoacyl-tRNA synthetase family. Glutamate--tRNA ligase type 1 subfamily. In terms of assembly, monomer. Requires Zn(2+) as cofactor.

The protein resides in the cytoplasm. It carries out the reaction tRNA(Glu) + L-glutamate + ATP = L-glutamyl-tRNA(Glu) + AMP + diphosphate. Catalyzes the attachment of glutamate to tRNA(Glu) in a two-step reaction: glutamate is first activated by ATP to form Glu-AMP and then transferred to the acceptor end of tRNA(Glu). The protein is Glutamate--tRNA ligase of Escherichia coli O6:K15:H31 (strain 536 / UPEC).